The primary structure comprises 531 residues: 2-isopropylmalate synthase (531 aa).

One can recognise a Pyruvate carboxyltransferase domain in the interval 8–284; that stretch reads IIIFDTTLRD…LTNIDTKQIY (277 aa). Mn(2+) is bound by residues aspartate 17, histidine 208, histidine 210, and asparagine 244. The tract at residues 408 to 531 is regulatory domain; that stretch reads RVELVQVSCG…TQDKQTEVTA (124 aa).

It belongs to the alpha-IPM synthase/homocitrate synthase family. LeuA type 1 subfamily. In terms of assembly, homodimer. Mn(2+) is required as a cofactor.

It is found in the cytoplasm. The enzyme catalyses 3-methyl-2-oxobutanoate + acetyl-CoA + H2O = (2S)-2-isopropylmalate + CoA + H(+). It participates in amino-acid biosynthesis; L-leucine biosynthesis; L-leucine from 3-methyl-2-oxobutanoate: step 1/4. Functionally, catalyzes the condensation of the acetyl group of acetyl-CoA with 3-methyl-2-oxobutanoate (2-ketoisovalerate) to form 3-carboxy-3-hydroxy-4-methylpentanoate (2-isopropylmalate). The protein is 2-isopropylmalate synthase of Trichormus variabilis (strain ATCC 29413 / PCC 7937) (Anabaena variabilis).